Here is a 401-residue protein sequence, read N- to C-terminus: Probable aspartic-type endopeptidase TRV_05382 (401 aa).

The N-terminal stretch at 1 to 22 (MWHSPFFTAFTLFLGFFTLTLA) is a signal peptide. N80 and N102 each carry an N-linked (GlcNAc...) asparagine glycan. One can recognise a Peptidase A1 domain in the interval 94-398 (FVNEITIGNN…DHDGPKMGFA (305 aa)). D110 is a catalytic residue. The N-linked (GlcNAc...) asparagine glycan is linked to N282. D292 is an active-site residue. N-linked (GlcNAc...) asparagine glycosylation is present at N329.

Belongs to the peptidase A1 family.

Its subcellular location is the secreted. Functionally, probable aspartic-type endopeptidase which contributes to virulence. This chain is Probable aspartic-type endopeptidase TRV_05382, found in Trichophyton verrucosum (strain HKI 0517).